The primary structure comprises 219 residues: UPF0502 protein GSU0233 (219 aa).

It belongs to the UPF0502 family.

The chain is UPF0502 protein GSU0233 from Geobacter sulfurreducens (strain ATCC 51573 / DSM 12127 / PCA).